The sequence spans 730 residues: Catalase-peroxidase (730 aa).

The tract at residues 1 to 21 (MTENKCPVTGKMSKATAGSGT) is disordered. The tryptophyl-tyrosyl-methioninium (Trp-Tyr) (with M-244) cross-link spans 95-218 (WHSAGTYRVG…LAAVQMGLIY (124 aa)). H96 serves as the catalytic Proton acceptor. A cross-link (tryptophyl-tyrosyl-methioninium (Tyr-Met) (with W-95)) is located at residues 218–244 (YVNPEGPNGNPDPLGSAHDVRETFARM). Residue H259 coordinates heme b.

The protein belongs to the peroxidase family. Peroxidase/catalase subfamily. Homodimer or homotetramer. Requires heme b as cofactor. Formation of the three residue Trp-Tyr-Met cross-link is important for the catalase, but not the peroxidase activity of the enzyme.

The catalysed reaction is H2O2 + AH2 = A + 2 H2O. It carries out the reaction 2 H2O2 = O2 + 2 H2O. In terms of biological role, bifunctional enzyme with both catalase and broad-spectrum peroxidase activity. This Clostridium botulinum (strain Alaska E43 / Type E3) protein is Catalase-peroxidase.